The sequence spans 326 residues: Flotillin-like protein FloA (326 aa).

The next 2 membrane-spanning stretches (helical) occupy residues 6 to 26 and 27 to 47; these read IILFFLVVAVIVLFYFVGSSV and SLWIQALVSGARVGLLNIVFM.

It belongs to the flotillin-like FloA family. Homooligomerizes.

It localises to the cell membrane. It is found in the membrane raft. Its function is as follows. Found in functional membrane microdomains (FMM) that may be equivalent to eukaryotic membrane rafts. FMMs are highly dynamic and increase in number as cells age. Flotillins are thought to be important factors in membrane fluidity. The sequence is that of Flotillin-like protein FloA from Desulfosudis oleivorans (strain DSM 6200 / JCM 39069 / Hxd3) (Desulfococcus oleovorans).